The following is a 358-amino-acid chain: Phospho-N-acetylmuramoyl-pentapeptide-transferase (358 aa).

10 consecutive transmembrane segments (helical) span residues 27–47, 81–101, 106–126, 147–167, 171–191, 201–221, 228–248, 255–275, 278–298, and 336–356; these read LFNNFIFIGVFILFFFLSLFA, MGGVFLMIPFFILLLIITINL, LFLLLLTIFGFYITGFLDDYL, VISIIFILLAYEKNLINPLVI, SWVINMNIFILPISFLVLVGI, LDGLAAGCSGIVFYGLGTEIL, LFVFSILCFSMSGLCLGFLKY, IFMGDTGSLSIGATLGTIALL, SVFTLSIFSGIFIIESLSVII, and IVENFWKINILLIILGIVLKI.

The protein belongs to the glycosyltransferase 4 family. MraY subfamily. The cofactor is Mg(2+).

It is found in the cell inner membrane. The enzyme catalyses UDP-N-acetyl-alpha-D-muramoyl-L-alanyl-gamma-D-glutamyl-meso-2,6-diaminopimeloyl-D-alanyl-D-alanine + di-trans,octa-cis-undecaprenyl phosphate = di-trans,octa-cis-undecaprenyl diphospho-N-acetyl-alpha-D-muramoyl-L-alanyl-D-glutamyl-meso-2,6-diaminopimeloyl-D-alanyl-D-alanine + UMP. Its pathway is cell wall biogenesis; peptidoglycan biosynthesis. Its function is as follows. Catalyzes the initial step of the lipid cycle reactions in the biosynthesis of the cell wall peptidoglycan: transfers peptidoglycan precursor phospho-MurNAc-pentapeptide from UDP-MurNAc-pentapeptide onto the lipid carrier undecaprenyl phosphate, yielding undecaprenyl-pyrophosphoryl-MurNAc-pentapeptide, known as lipid I. The chain is Phospho-N-acetylmuramoyl-pentapeptide-transferase from Prochlorococcus marinus (strain MIT 9215).